Here is a 236-residue protein sequence, read N- to C-terminus: 2-C-methyl-D-erythritol 4-phosphate cytidylyltransferase (236 aa).

This sequence belongs to the IspD/TarI cytidylyltransferase family. IspD subfamily.

It carries out the reaction 2-C-methyl-D-erythritol 4-phosphate + CTP + H(+) = 4-CDP-2-C-methyl-D-erythritol + diphosphate. It participates in isoprenoid biosynthesis; isopentenyl diphosphate biosynthesis via DXP pathway; isopentenyl diphosphate from 1-deoxy-D-xylulose 5-phosphate: step 2/6. Functionally, catalyzes the formation of 4-diphosphocytidyl-2-C-methyl-D-erythritol from CTP and 2-C-methyl-D-erythritol 4-phosphate (MEP). This Burkholderia pseudomallei (strain 1106a) protein is 2-C-methyl-D-erythritol 4-phosphate cytidylyltransferase.